Here is a 367-residue protein sequence, read N- to C-terminus: 3-ketodihydrosphingosine reductase ksrA (367 aa).

The chain crosses the membrane as a helical span at residues Ala12–Ser32. NADPH-binding residues include Gly53, Ser55, Gly57, Arg78, Lys82, Asp108, and Leu109. A GXSXG motif is present at residues Gly53 to Gly57. The helical transmembrane segment at Leu193–Pro213 threads the bilayer. Catalysis depends on Tyr211, which acts as the Proton acceptor. Residues Tyr211, Lys215, and Ile259 each coordinate NADP(+). The active-site Lowers pKa of active site Tyr is the Lys215.

It belongs to the short-chain dehydrogenases/reductases (SDR) family.

It localises to the endoplasmic reticulum membrane. It carries out the reaction sphinganine + NADP(+) = 3-oxosphinganine + NADPH + H(+). Its pathway is lipid metabolism; sphingolipid metabolism. Functionally, catalyzes the reduction of 3'-oxosphinganine (3-ketodihydrosphingosine/KDS) to sphinganine (dihydrosphingosine/DHS), the second step of de novo sphingolipid biosynthesis. The chain is 3-ketodihydrosphingosine reductase ksrA from Aspergillus fumigatus (strain ATCC MYA-4609 / CBS 101355 / FGSC A1100 / Af293) (Neosartorya fumigata).